A 208-amino-acid polypeptide reads, in one-letter code: Thymidylate kinase (208 aa).

10-17 (GPEGSGKT) is an ATP binding site.

It belongs to the thymidylate kinase family.

It carries out the reaction dTMP + ATP = dTDP + ADP. Phosphorylation of dTMP to form dTDP in both de novo and salvage pathways of dTTP synthesis. The polypeptide is Thymidylate kinase (Bacillus anthracis).